The primary structure comprises 261 residues: Serine acetyltransferase (261 aa).

The protein belongs to the transferase hexapeptide repeat family.

The protein localises to the cytoplasm. It catalyses the reaction L-serine + acetyl-CoA = O-acetyl-L-serine + CoA. It participates in amino-acid biosynthesis; L-cysteine biosynthesis; L-cysteine from L-serine: step 1/2. The protein is Serine acetyltransferase (cysE) of Buchnera aphidicola subsp. Schizaphis graminum (strain Sg).